The following is a 164-amino-acid chain: Putative 4-hydroxy-4-methyl-2-oxoglutarate aldolase (164 aa).

Residues 74-77 (GGNL) and R96 contribute to the substrate site. A divalent metal cation is bound at residue D97.

This sequence belongs to the class II aldolase/RraA-like family. As to quaternary structure, homotrimer. A divalent metal cation serves as cofactor.

It catalyses the reaction 4-hydroxy-4-methyl-2-oxoglutarate = 2 pyruvate. The enzyme catalyses oxaloacetate + H(+) = pyruvate + CO2. In terms of biological role, catalyzes the aldol cleavage of 4-hydroxy-4-methyl-2-oxoglutarate (HMG) into 2 molecules of pyruvate. Also contains a secondary oxaloacetate (OAA) decarboxylase activity due to the common pyruvate enolate transition state formed following C-C bond cleavage in the retro-aldol and decarboxylation reactions. The sequence is that of Putative 4-hydroxy-4-methyl-2-oxoglutarate aldolase from Thermus thermophilus (strain ATCC BAA-163 / DSM 7039 / HB27).